Reading from the N-terminus, the 174-residue chain is Large ribosomal subunit protein uL18 (174 aa).

It belongs to the universal ribosomal protein uL18 family. In terms of assembly, part of the 50S ribosomal subunit. Contacts the 5S and 23S rRNAs.

This is one of the proteins that bind and probably mediate the attachment of the 5S RNA into the large ribosomal subunit, where it forms part of the central protuberance. The polypeptide is Large ribosomal subunit protein uL18 (Methanoregula boonei (strain DSM 21154 / JCM 14090 / 6A8)).